Consider the following 463-residue polypeptide: Asparagine--tRNA ligase (463 aa).

It belongs to the class-II aminoacyl-tRNA synthetase family. As to quaternary structure, homodimer.

It localises to the cytoplasm. It catalyses the reaction tRNA(Asn) + L-asparagine + ATP = L-asparaginyl-tRNA(Asn) + AMP + diphosphate + H(+). In Clostridium acetobutylicum (strain ATCC 824 / DSM 792 / JCM 1419 / IAM 19013 / LMG 5710 / NBRC 13948 / NRRL B-527 / VKM B-1787 / 2291 / W), this protein is Asparagine--tRNA ligase.